The chain runs to 255 residues: Thiazole synthase (255 aa).

Lysine 97 serves as the catalytic Schiff-base intermediate with DXP. 1-deoxy-D-xylulose 5-phosphate-binding positions include glycine 158, 184–185 (AG), and 206–207 (NT).

This sequence belongs to the ThiG family. In terms of assembly, homotetramer. Forms heterodimers with either ThiH or ThiS.

It localises to the cytoplasm. It catalyses the reaction [ThiS sulfur-carrier protein]-C-terminal-Gly-aminoethanethioate + 2-iminoacetate + 1-deoxy-D-xylulose 5-phosphate = [ThiS sulfur-carrier protein]-C-terminal Gly-Gly + 2-[(2R,5Z)-2-carboxy-4-methylthiazol-5(2H)-ylidene]ethyl phosphate + 2 H2O + H(+). Its pathway is cofactor biosynthesis; thiamine diphosphate biosynthesis. Functionally, catalyzes the rearrangement of 1-deoxy-D-xylulose 5-phosphate (DXP) to produce the thiazole phosphate moiety of thiamine. Sulfur is provided by the thiocarboxylate moiety of the carrier protein ThiS. In vitro, sulfur can be provided by H(2)S. This chain is Thiazole synthase, found in Moorella thermoacetica (strain ATCC 39073 / JCM 9320).